Here is a 450-residue protein sequence, read N- to C-terminus: Glucose-6-phosphate isomerase (450 aa).

Residue T39 is modified to Phosphothreonine. Residue E291 is the Proton donor of the active site. Catalysis depends on residues H312 and K426.

This sequence belongs to the GPI family.

It is found in the cytoplasm. It carries out the reaction alpha-D-glucose 6-phosphate = beta-D-fructose 6-phosphate. It participates in carbohydrate biosynthesis; gluconeogenesis. It functions in the pathway carbohydrate degradation; glycolysis; D-glyceraldehyde 3-phosphate and glycerone phosphate from D-glucose: step 2/4. Catalyzes the reversible isomerization of glucose-6-phosphate to fructose-6-phosphate. The polypeptide is Glucose-6-phosphate isomerase (Halalkalibacterium halodurans (strain ATCC BAA-125 / DSM 18197 / FERM 7344 / JCM 9153 / C-125) (Bacillus halodurans)).